We begin with the raw amino-acid sequence, 125 residues long: Histone H2A, orphon (125 aa).

The span at 1-18 shows a compositional bias: basic residues; sequence MSGRGKGGKVKAKAKSRS. Positions 1–21 are disordered; sequence MSGRGKGGKVKAKAKSRSSRA. Ser2 is subject to N-acetylserine. Ser2 carries the phosphoserine modification. A Glycyl lysine isopeptide (Lys-Gly) (interchain with G-Cter in ubiquitin) cross-link involves residue Lys119.

It belongs to the histone H2A family. In terms of assembly, the nucleosome is a histone octamer containing two molecules each of H2A, H2B, H3 and H4 assembled in one H3-H4 heterotetramer and two H2A-H2B heterodimers. The octamer wraps approximately 147 bp of DNA. Monoubiquitination of Lys-119 gives a specific tag for epigenetic transcriptional repression. Post-translationally, phosphorylation on Ser-2 is enhanced during mitosis. Phosphorylation on Ser-2 directly represses transcription.

The protein resides in the nucleus. It is found in the chromosome. In terms of biological role, core component of nucleosome. Nucleosomes wrap and compact DNA into chromatin, limiting DNA accessibility to the cellular machineries which require DNA as a template. Histones thereby play a central role in transcription regulation, DNA repair, DNA replication and chromosomal stability. DNA accessibility is regulated via a complex set of post-translational modifications of histones, also called histone code, and nucleosome remodeling. This chain is Histone H2A, orphon, found in Chironomus thummi thummi (Midge).